Here is a 320-residue protein sequence, read N- to C-terminus: Biotin synthase (320 aa).

Residues Asn-45–Arg-274 form the Radical SAM core domain. Residues Cys-60, Cys-64, and Cys-67 each contribute to the [4Fe-4S] cluster site. [2Fe-2S] cluster contacts are provided by Cys-105, Cys-137, Cys-197, and Arg-269.

It belongs to the radical SAM superfamily. Biotin synthase family. In terms of assembly, homodimer. It depends on [4Fe-4S] cluster as a cofactor. [2Fe-2S] cluster is required as a cofactor.

It catalyses the reaction (4R,5S)-dethiobiotin + (sulfur carrier)-SH + 2 reduced [2Fe-2S]-[ferredoxin] + 2 S-adenosyl-L-methionine = (sulfur carrier)-H + biotin + 2 5'-deoxyadenosine + 2 L-methionine + 2 oxidized [2Fe-2S]-[ferredoxin]. The protein operates within cofactor biosynthesis; biotin biosynthesis; biotin from 7,8-diaminononanoate: step 2/2. Its function is as follows. Catalyzes the conversion of dethiobiotin (DTB) to biotin by the insertion of a sulfur atom into dethiobiotin via a radical-based mechanism. This chain is Biotin synthase, found in Beijerinckia indica subsp. indica (strain ATCC 9039 / DSM 1715 / NCIMB 8712).